The following is a 428-amino-acid chain: Serine--tRNA ligase (428 aa).

231–233 (TAE) is an L-serine binding site. Residue 262–264 (RSE) participates in ATP binding. E285 contacts L-serine. 349-352 (EISS) is a binding site for ATP. S385 provides a ligand contact to L-serine.

The protein belongs to the class-II aminoacyl-tRNA synthetase family. Type-1 seryl-tRNA synthetase subfamily. Homodimer. The tRNA molecule binds across the dimer.

It is found in the cytoplasm. It carries out the reaction tRNA(Ser) + L-serine + ATP = L-seryl-tRNA(Ser) + AMP + diphosphate + H(+). It catalyses the reaction tRNA(Sec) + L-serine + ATP = L-seryl-tRNA(Sec) + AMP + diphosphate + H(+). It participates in aminoacyl-tRNA biosynthesis; selenocysteinyl-tRNA(Sec) biosynthesis; L-seryl-tRNA(Sec) from L-serine and tRNA(Sec): step 1/1. Its function is as follows. Catalyzes the attachment of serine to tRNA(Ser). Is also able to aminoacylate tRNA(Sec) with serine, to form the misacylated tRNA L-seryl-tRNA(Sec), which will be further converted into selenocysteinyl-tRNA(Sec). The sequence is that of Serine--tRNA ligase from Staphylococcus aureus (strain MSSA476).